Here is a 190-residue protein sequence, read N- to C-terminus: Hypoxanthine/guanine phosphoribosyltransferase (190 aa).

This sequence belongs to the purine/pyrimidine phosphoribosyltransferase family. Archaeal HPRT subfamily. Homodimer.

Its subcellular location is the cytoplasm. It catalyses the reaction IMP + diphosphate = hypoxanthine + 5-phospho-alpha-D-ribose 1-diphosphate. It carries out the reaction GMP + diphosphate = guanine + 5-phospho-alpha-D-ribose 1-diphosphate. It participates in purine metabolism; IMP biosynthesis via salvage pathway; IMP from hypoxanthine: step 1/1. Functionally, catalyzes a salvage reaction resulting in the formation of IMP that is energically less costly than de novo synthesis. This is Hypoxanthine/guanine phosphoribosyltransferase from Methanobacterium lacus (strain AL-21).